The primary structure comprises 82 residues: Putative membrane protein insertion efficiency factor (82 aa).

Belongs to the UPF0161 family.

It localises to the cell membrane. Functionally, could be involved in insertion of integral membrane proteins into the membrane. This chain is Putative membrane protein insertion efficiency factor, found in Streptococcus uberis (strain ATCC BAA-854 / 0140J).